The following is a 4151-amino-acid chain: Mycoketide-CoA synthase (4151 aa).

A coiled-coil region spans residues 2 to 32; it reads VDQLQHATEALRKALVQVERLKRTNRALLER. A Ketosynthase family 3 (KS3) 1 domain is found at 34-457; it reads SEPIAIVGMS…GTNAHVIIEA (424 aa). Module stretches follow at residues 35 to 2038 and 2057 to 4070; these read EPIA…RTEL and DPIA…RREL. The active-site Acyl-thioester intermediate; for beta-ketoacyl synthase 1 activity is the C203. Residues H338 and H379 each act as for beta-ketoacyl synthase 1 activity in the active site. Residues 559 to 880 are acyltransferase 1; it reads VFVFPGQGSQ…AASAFVAGVA (322 aa). S650 acts as the Acyl-ester intermediate; for acyltransferase 1 activity in catalysis. The tract at residues 926-1048 is N-terminal hotdog fold 1; it reads HPLLGAVVDL…GILRPGSVEP (123 aa). The dehydratase 1 stretch occupies residues 926-1194; sequence HPLLGAVVDL…VARPVTERQL (269 aa). One can recognise a PKS/mFAS DH 1 domain in the interval 926-1195; that stretch reads HPLLGAVVDL…ARPVTERQLL (270 aa). The Proton acceptor; for dehydratase activity 1 role is filled by H958. The interval 1060 to 1195 is C-terminal hotdog fold 1; it reads AVTVDVADGY…ARPVTERQLL (136 aa). The active-site Proton donor; for dehydratase activity 1 is D1120. An enoyl reductase 1 region spans residues 1366 to 1671; the sequence is GTFENLRLEP…QARHTGKVVM (306 aa). The beta-ketoacyl reductase 1 stretch occupies residues 1680 to 1858; it reads GTVLITGGTG…AISLGWGLWD (179 aa). Catalysis depends on Y1828, which acts as the For beta-ketoacyl reductase 1 activity. The Carrier 1 domain occupies 1963 to 2038; it reads AVLLGLVRLH…RLASYIRTEL (76 aa). An O-(pantetheine 4'-phosphoryl)serine modification is found at S1998. In terms of domain architecture, Ketosynthase family 3 (KS3) 2 spans 2056–2480; it reads EDPIAIVGMA…GTNAHVIIEA (425 aa). The Acyl-thioester intermediate; for beta-ketoacyl synthase 2 activity role is filled by C2226. Active-site for beta-ketoacyl synthase 2 activity residues include H2361 and H2402. The tract at residues 2582-2893 is acyltransferase 2; that stretch reads VFVFPGQGSQ…AVAQGFVTGM (312 aa). The active-site Acyl-ester intermediate; for acyltransferase 2 activity is the S2672. An N-terminal hotdog fold 2 region spans residues 2940 to 3062; that stretch reads HALLGAVIDL…GALRAGSAEP (123 aa). Positions 2940–3215 are dehydratase 2; the sequence is HALLGAVIDL…ARPVTDQQLR (276 aa). The 276-residue stretch at 2940–3215 folds into the PKS/mFAS DH 2 domain; that stretch reads HALLGAVIDL…ARPVTDQQLR (276 aa). The active-site Proton acceptor; for dehydratase activity 2 is H2972. Positions 3074–3215 are C-terminal hotdog fold 2; that stretch reads AVPVEVADGY…ARPVTDQQLR (142 aa). Residue D3135 is the Proton donor; for dehydratase activity 2 of the active site. Residues 3395–3701 form an enoyl reductase 2 region; that stretch reads GTFENLRLEL…QARHTGKVVM (307 aa). Residues 3710-3888 form a beta-ketoacyl reductase 2 region; the sequence is GTVLITGGTG…AISLGWGLWD (179 aa). Residue Y3858 is the For beta-ketoacyl reductase 2 activity of the active site. The 76-residue stretch at 3995–4070 folds into the Carrier 2 domain; sequence AVLLDLVRSH…ALAGYMRREL (76 aa). An O-(pantetheine 4'-phosphoryl)serine modification is found at S4030.

Forms a large supramolecular assembly mediated through specific interactions between the N- and C-terminus linkers.

It catalyses the reaction a medium-chain fatty acyl-CoA + 5 (S)-methylmalonyl-CoA + 5 malonyl-CoA + 22 NADPH + 32 H(+) = a mycoketide-CoA + 10 CO2 + 22 NADP(+) + 10 CoA + 11 H2O. Its pathway is lipid metabolism; fatty acid metabolism. In terms of biological role, involved in the synthesis of beta-D-mannosyl phosphomycoketide (MPM), an antigenic mycobacterial polyketide. Binds a fatty acyl-CoA as a starter unit, and extends it by five rounds of alternative additions of malonyl-CoA and methylmalonyl-CoA extender units. Depending on the starter unit, the enzyme forms mycoketide-CoAs of different lengths. Shows preference for small-/medium-chain starter fatty acyl substrates. Uses a hybrid modularly iterative mechanism, by forming a supramolecular assembly to perform repetitive cycles of iterations. In Mycobacterium tuberculosis (strain ATCC 25618 / H37Rv), this protein is Mycoketide-CoA synthase.